The primary structure comprises 487 residues: Photosystem II CP43 reaction center protein (487 aa).

Residues 1 to 28 (MKVFVLGWLLKINLMKTLYSQRRFYHVE) constitute a propeptide that is removed on maturation. A run of 5 helical transmembrane segments spans residues 83–107 (LFEV…PHLA), 148–169 (LIGP…RDKN), 192–214 (KSLF…RFVS), 269–289 (KPFA…LSYS), and 305–326 (WYNN…ASQA). A [CaMn4O5] cluster-binding site is contributed by E381. A helical transmembrane segment spans residues 461–485 (RARAAAAGFEKGINRENEPVLSMRP).

This sequence belongs to the PsbB/PsbC family. PsbC subfamily. PSII is composed of 1 copy each of membrane proteins PsbA, PsbB, PsbC, PsbD, PsbE, PsbF, PsbH, PsbI, PsbJ, PsbK, PsbL, PsbM, PsbT, PsbX, PsbY, PsbZ, Psb30/Ycf12, at least 3 peripheral proteins of the oxygen-evolving complex and a large number of cofactors. It forms dimeric complexes. It depends on Binds multiple chlorophylls and provides some of the ligands for the Ca-4Mn-5O cluster of the oxygen-evolving complex. It may also provide a ligand for a Cl- that is required for oxygen evolution. PSII binds additional chlorophylls, carotenoids and specific lipids. as a cofactor.

The protein resides in the plastid. Its subcellular location is the chloroplast thylakoid membrane. One of the components of the core complex of photosystem II (PSII). It binds chlorophyll and helps catalyze the primary light-induced photochemical processes of PSII. PSII is a light-driven water:plastoquinone oxidoreductase, using light energy to abstract electrons from H(2)O, generating O(2) and a proton gradient subsequently used for ATP formation. In Porphyra purpurea (Red seaweed), this protein is Photosystem II CP43 reaction center protein.